The following is a 203-amino-acid chain: Outer-membrane lipoprotein carrier protein (203 aa).

Positions 1 to 21 (MKKLILIGCLMAGMNINVAWA) are cleaved as a signal peptide.

It belongs to the LolA family. In terms of assembly, monomer.

Its subcellular location is the periplasm. In terms of biological role, participates in the translocation of lipoproteins from the inner membrane to the outer membrane. Only forms a complex with a lipoprotein if the residue after the N-terminal Cys is not an aspartate (The Asp acts as a targeting signal to indicate that the lipoprotein should stay in the inner membrane). The polypeptide is Outer-membrane lipoprotein carrier protein (Photorhabdus laumondii subsp. laumondii (strain DSM 15139 / CIP 105565 / TT01) (Photorhabdus luminescens subsp. laumondii)).